The chain runs to 463 residues: Hydrolase pyiE (463 aa).

Serine 252 functions as the Nucleophile in the catalytic mechanism. A disordered region spans residues lysine 350–aspartate 373.

Belongs to the AB hydrolase superfamily. FUS2 hydrolase family. Homodimer.

Its pathway is mycotoxin biosynthesis. In terms of biological role, hydrolyase; part of the gene cluster that mediates the biosynthesis of the mycotoxin pyrichalasin H, a tyrosine-derived cytochalasan that inhibits the growth of rice seedlings, but also inhibits lymphocyte capping and actin polymerization and alters cell morphology. Pyrichalasin H is indicated as the responsible agent for the genus-specific pathogenicity of M.grisea toward crabgrass. The first step in the pathway is catalyzed by the O-methyltransferase pyiA which methylates free tyrosine to generate the precursor O-methyltyrosine. The hybrid PKS-NRPS pyiS, assisted by the enoyl reductase pyiC, are responsible for fusion of the O-methyltyrosine precursor and the polyketide backbone. The polyketide synthase module (PKS) of pyiS is responsible for the synthesis of the polyketide backbone and the downstream nonribosomal peptide synthetase (NRPS) amidates the carboxyl end of the polyketide with the O-methyltyrosine precursor. As the NRPS A-domain demonstrates substrate tolerance, pyiS can also use phenylalanine, tyrosine and even para-chlorophenylalanine as amino acid precursor, which leads to the production of novel cytochalasans, including halogenated cytochalasans. Because pyiS lacks a designated enoylreductase (ER) domain, the required activity is provided the enoyl reductase pyiC. Reduction by the hydrolyase pyiE leads to 1,5-dihydropyrrolone, which is substrate for dehydration and intra-molecular Diels-Alder cyclization by the Diels-Alderase pyiF to yield the required isoindolone-fused macrocycle. The tailoring cytochrome P450 monooxygenases piyD and piyG catalyze the hydroxylation at C-18 and C-7, respectivily, whereas the short-chain dehydrogenase/reductase pyiH reduces the carbonyl at C-21 in preparation for the transfer of an acetyl group by the acetyltransferase pyiB. These 3 reactions whose order is not clear yet, lead to the production of O-methylpyrichalasin J, a deacetylated pyrichalasin H. Finally, pyiB to converts O-methylpyrichalasin J into the final product pyrichalasin H via acetylation of C-21. The sequence is that of Hydrolase pyiE from Pyricularia grisea (Crabgrass-specific blast fungus).